The chain runs to 207 residues: Small ribosomal subunit protein uS4 (207 aa).

Residues 97–160 enclose the S4 RNA-binding domain; sequence SRLDNVVYRM…KKQARIVEAL (64 aa).

It belongs to the universal ribosomal protein uS4 family. As to quaternary structure, part of the 30S ribosomal subunit. Contacts protein S5. The interaction surface between S4 and S5 is involved in control of translational fidelity.

Its function is as follows. One of the primary rRNA binding proteins, it binds directly to 16S rRNA where it nucleates assembly of the body of the 30S subunit. With S5 and S12 plays an important role in translational accuracy. The sequence is that of Small ribosomal subunit protein uS4 from Burkholderia pseudomallei (strain 1106a).